The chain runs to 211 residues: Thymidylate kinase (211 aa).

Residue 11–18 (GPDGAGKT) coordinates ATP.

This sequence belongs to the thymidylate kinase family.

The catalysed reaction is dTMP + ATP = dTDP + ADP. In terms of biological role, phosphorylation of dTMP to form dTDP in both de novo and salvage pathways of dTTP synthesis. In Streptococcus uberis (strain ATCC BAA-854 / 0140J), this protein is Thymidylate kinase.